Here is a 156-residue protein sequence, read N- to C-terminus: Transcription elongation factor GreA (156 aa).

Positions 1–32 (MKKVRLTREGYEKLKKELEDLKRKFMYEISER) form a coiled coil.

It belongs to the GreA/GreB family.

In terms of biological role, necessary for efficient RNA polymerase transcription elongation past template-encoded arresting sites. The arresting sites in DNA have the property of trapping a certain fraction of elongating RNA polymerases that pass through, resulting in locked ternary complexes. Cleavage of the nascent transcript by cleavage factors such as GreA or GreB allows the resumption of elongation from the new 3'terminus. GreA releases sequences of 2 to 3 nucleotides. This is Transcription elongation factor GreA from Thermotoga petrophila (strain ATCC BAA-488 / DSM 13995 / JCM 10881 / RKU-1).